Reading from the N-terminus, the 642-residue chain is Serine/threonine-protein kinase pakA (642 aa).

Polar residues-rich tracts occupy residues 1-12 (MSLKKQQQQSDF) and 38-48 (LRQSASFTALN). The tract at residues 1–82 (MSLKKQQQQS…GFGTKPRRKN (82 aa)) is disordered. In terms of domain architecture, CRIB spans 100–113 (ISAPENPVHVTHVG). 2 disordered regions span residues 180–276 (GEYP…PIPE) and 317–338 (QLDR…RTRQ). Low complexity-rich tracts occupy residues 217-227 (SQSSPVPVLSS) and 254-266 (VVSN…RPAN). Positions 361-612 (YYNLNKIGQG…AHDLLKHPFM (252 aa)) constitute a Protein kinase domain. ATP is bound by residues 367–375 (IGQGASGGV) and Lys-390. Asp-480 (proton acceptor) is an active-site residue.

It belongs to the protein kinase superfamily. STE Ser/Thr protein kinase family. STE20 subfamily.

Its subcellular location is the cytoplasm. It localises to the nucleus. It catalyses the reaction L-seryl-[protein] + ATP = O-phospho-L-seryl-[protein] + ADP + H(+). It carries out the reaction L-threonyl-[protein] + ATP = O-phospho-L-threonyl-[protein] + ADP + H(+). MAP4K component of the MAPK pathway required for the mating pheromone response and the regulation of cell polarity and cell cycle. This Talaromyces marneffei (Penicillium marneffei) protein is Serine/threonine-protein kinase pakA (pakA).